Here is a 78-residue protein sequence, read N- to C-terminus: Large ribosomal subunit protein bL28B (78 aa).

The protein belongs to the bacterial ribosomal protein bL28 family.

In Streptomyces coelicolor (strain ATCC BAA-471 / A3(2) / M145), this protein is Large ribosomal subunit protein bL28B (rpmB2).